A 228-amino-acid chain; its full sequence is Cytochrome c oxidase subunit 2 (228 aa).

The Mitochondrial intermembrane portion of the chain corresponds to methionine 1–histidine 26. The helical transmembrane segment at threonine 27–asparagine 48 threads the bilayer. Topologically, residues lysine 49–glutamate 62 are mitochondrial matrix. The chain crosses the membrane as a helical span at residues leucine 63–arginine 82. Topologically, residues leucine 83–tyrosine 228 are mitochondrial intermembrane. Residues histidine 161, cysteine 196, glutamate 198, cysteine 200, histidine 204, and methionine 207 each coordinate Cu cation. Glutamate 198 is a binding site for Mg(2+).

It belongs to the cytochrome c oxidase subunit 2 family. In terms of assembly, component of the cytochrome c oxidase (complex IV, CIV), a multisubunit enzyme composed of a catalytic core of 3 subunits and several supernumerary subunits. The complex exists as a monomer or a dimer and forms supercomplexes (SCs) in the inner mitochondrial membrane with ubiquinol-cytochrome c oxidoreductase (cytochrome b-c1 complex, complex III, CIII). Requires Cu cation as cofactor.

It is found in the mitochondrion inner membrane. The enzyme catalyses 4 Fe(II)-[cytochrome c] + O2 + 8 H(+)(in) = 4 Fe(III)-[cytochrome c] + 2 H2O + 4 H(+)(out). In terms of biological role, component of the cytochrome c oxidase, the last enzyme in the mitochondrial electron transport chain which drives oxidative phosphorylation. The respiratory chain contains 3 multisubunit complexes succinate dehydrogenase (complex II, CII), ubiquinol-cytochrome c oxidoreductase (cytochrome b-c1 complex, complex III, CIII) and cytochrome c oxidase (complex IV, CIV), that cooperate to transfer electrons derived from NADH and succinate to molecular oxygen, creating an electrochemical gradient over the inner membrane that drives transmembrane transport and the ATP synthase. Cytochrome c oxidase is the component of the respiratory chain that catalyzes the reduction of oxygen to water. Electrons originating from reduced cytochrome c in the intermembrane space (IMS) are transferred via the dinuclear copper A center (CU(A)) of subunit 2 and heme A of subunit 1 to the active site in subunit 1, a binuclear center (BNC) formed by heme A3 and copper B (CU(B)). The BNC reduces molecular oxygen to 2 water molecules using 4 electrons from cytochrome c in the IMS and 4 protons from the mitochondrial matrix. The sequence is that of Cytochrome c oxidase subunit 2 (COII) from Galleria mellonella (Greater wax moth).